The chain runs to 205 residues: MIKVALPKGRIANESLALFERLYGSKFVFDDRKLILEHQGFIFMLVRSQDVPTYVIHQAVDIGIVGLDVIEEQQANVVKLLNLGIGKCKVVVGSELGKSIDYQKPQLKIATKMPHITRKYFSNKAISIEALKLYGSIELAPLVGLSDAIVDIVETGVTMKQNNLKIDEVIMESSAYLIANKNSFYEKKELILALYERLKSTLDSK.

It belongs to the ATP phosphoribosyltransferase family. Short subfamily. As to quaternary structure, heteromultimer composed of HisG and HisZ subunits.

The protein localises to the cytoplasm. It carries out the reaction 1-(5-phospho-beta-D-ribosyl)-ATP + diphosphate = 5-phospho-alpha-D-ribose 1-diphosphate + ATP. It participates in amino-acid biosynthesis; L-histidine biosynthesis; L-histidine from 5-phospho-alpha-D-ribose 1-diphosphate: step 1/9. In terms of biological role, catalyzes the condensation of ATP and 5-phosphoribose 1-diphosphate to form N'-(5'-phosphoribosyl)-ATP (PR-ATP). Has a crucial role in the pathway because the rate of histidine biosynthesis seems to be controlled primarily by regulation of HisG enzymatic activity. This Helicobacter hepaticus (strain ATCC 51449 / 3B1) protein is ATP phosphoribosyltransferase.